The following is a 503-amino-acid chain: Portal protein (503 aa).

A disordered region spans residues 463 to 503 (EMNQYAEMQGNLLDDEGGDDDLEEDDPNAGAAESGGAGQVS). Residues 475–489 (LDDEGGDDDLEEDDP) are compositionally biased toward acidic residues.

Belongs to the SPP1-like portal protein family. Homododecamer. Has been seen as 13-mer and 14-mer multimer in experiments, but assembles as homododecamer in vivo. Interacts with the gp7 protein. Interacts with the connector proteins gp15; this interaction occurs at the end of the packaging when the terminase complex is replaced by the connector.

It is found in the virion. Functionally, forms the portal vertex of the capsid. This portal plays critical roles in head assembly, genome packaging, neck/tail attachment, and genome ejection. The portal protein multimerizes as a single ring-shaped homododecamer arranged around a central channel. Binds to the terminase subunits to form the packaging machine. Necessary to ensure correct procapsid size during capsid assembly. Once the capsid is packaged with the DNA, the terminase complex is substituted by the connector proteins gp15. In Bacillus phage SPP1 (Bacteriophage SPP1), this protein is Portal protein (6).